A 150-amino-acid chain; its full sequence is Cell division protein SepF (150 aa).

It belongs to the SepF family. As to quaternary structure, homodimer. Interacts with FtsZ.

The protein resides in the cytoplasm. Its function is as follows. Cell division protein that is part of the divisome complex and is recruited early to the Z-ring. Probably stimulates Z-ring formation, perhaps through the cross-linking of FtsZ protofilaments. Its function overlaps with FtsA. The sequence is that of Cell division protein SepF from Clostridium botulinum (strain ATCC 19397 / Type A).